A 118-amino-acid polypeptide reads, in one-letter code: Large ribosomal subunit protein bL17 (118 aa).

This sequence belongs to the bacterial ribosomal protein bL17 family. As to quaternary structure, part of the 50S ribosomal subunit. Contacts protein L32.

The sequence is that of Large ribosomal subunit protein bL17 from Thermus thermophilus (strain ATCC BAA-163 / DSM 7039 / HB27).